The sequence spans 159 residues: Ribosomal RNA large subunit methyltransferase H (159 aa).

Residues Leu76, Gly108, and 127–132 (LSKMTF) each bind S-adenosyl-L-methionine.

Belongs to the RNA methyltransferase RlmH family. In terms of assembly, homodimer.

The protein resides in the cytoplasm. It carries out the reaction pseudouridine(1915) in 23S rRNA + S-adenosyl-L-methionine = N(3)-methylpseudouridine(1915) in 23S rRNA + S-adenosyl-L-homocysteine + H(+). Specifically methylates the pseudouridine at position 1915 (m3Psi1915) in 23S rRNA. The sequence is that of Ribosomal RNA large subunit methyltransferase H from Ureaplasma urealyticum serovar 10 (strain ATCC 33699 / Western).